We begin with the raw amino-acid sequence, 294 residues long: MPWIQIKLNATAENAEAIGDMLMEETGALSATFLDAQDTPVFEPMPGETRLWGDTDVIGLYDAEADMDFVLNMLKNSPLIAEDFAYKIEQLEDKDWEREWMVNFHPMRFGRRLWICPSWREAPEPNAVNVLLDPGLAFGTGTHPTTSLCLEWLDGQDLVGKTIIDFGCGSGILAIAALKLGAEKVIGIDIDPQAIQASRDNAERNGVSDKLALFLPQDQPTDVQADVVVANILAGPLRELSPVIKSLVKPGGKLAISGVLEIQAEDVSTYYSDELALDPVVARDEWCRISGYKA.

S-adenosyl-L-methionine is bound by residues Thr-146, Gly-167, Asp-189, and Asn-231.

The protein belongs to the methyltransferase superfamily. PrmA family.

It is found in the cytoplasm. It carries out the reaction L-lysyl-[protein] + 3 S-adenosyl-L-methionine = N(6),N(6),N(6)-trimethyl-L-lysyl-[protein] + 3 S-adenosyl-L-homocysteine + 3 H(+). In terms of biological role, methylates ribosomal protein L11. The chain is Ribosomal protein L11 methyltransferase from Photobacterium profundum (strain SS9).